The chain runs to 660 residues: Bifunctional polymyxin resistance protein ArnA (660 aa).

Residues 1–304 (MKTVVFAYHD…TLGLVQGSRL (304 aa)) are formyltransferase ArnAFT. 86-88 (HLI) lines the (6R)-10-formyltetrahydrofolate pocket. The active-site Proton donor; for formyltransferase activity is the histidine 104. (6R)-10-formyltetrahydrofolate-binding positions include arginine 114 and 136-140 (VKRAD). A dehydrogenase ArnADH region spans residues 314–660 (RRTRVLILGV…RTVDLTDKPS (347 aa)). Residues aspartate 347 and 368 to 369 (DI) contribute to the NAD(+) site. Residues alanine 393, tyrosine 398, and 432–433 (TS) contribute to the UDP-alpha-D-glucuronate site. Glutamate 434 serves as the catalytic Proton acceptor; for decarboxylase activity. Residues arginine 460, asparagine 492, 526 to 535 (KLIDGGKQKR), and tyrosine 613 each bind UDP-alpha-D-glucuronate. Catalysis depends on arginine 619, which acts as the Proton donor; for decarboxylase activity.

In the N-terminal section; belongs to the Fmt family. UDP-L-Ara4N formyltransferase subfamily. It in the C-terminal section; belongs to the NAD(P)-dependent epimerase/dehydratase family. UDP-glucuronic acid decarboxylase subfamily. As to quaternary structure, homohexamer, formed by a dimer of trimers.

It carries out the reaction UDP-alpha-D-glucuronate + NAD(+) = UDP-beta-L-threo-pentopyranos-4-ulose + CO2 + NADH. The enzyme catalyses UDP-4-amino-4-deoxy-beta-L-arabinose + (6R)-10-formyltetrahydrofolate = UDP-4-deoxy-4-formamido-beta-L-arabinose + (6S)-5,6,7,8-tetrahydrofolate + H(+). The protein operates within nucleotide-sugar biosynthesis; UDP-4-deoxy-4-formamido-beta-L-arabinose biosynthesis; UDP-4-deoxy-4-formamido-beta-L-arabinose from UDP-alpha-D-glucuronate: step 1/3. It functions in the pathway nucleotide-sugar biosynthesis; UDP-4-deoxy-4-formamido-beta-L-arabinose biosynthesis; UDP-4-deoxy-4-formamido-beta-L-arabinose from UDP-alpha-D-glucuronate: step 3/3. Its pathway is bacterial outer membrane biogenesis; lipopolysaccharide biosynthesis. Its function is as follows. Bifunctional enzyme that catalyzes the oxidative decarboxylation of UDP-glucuronic acid (UDP-GlcUA) to UDP-4-keto-arabinose (UDP-Ara4O) and the addition of a formyl group to UDP-4-amino-4-deoxy-L-arabinose (UDP-L-Ara4N) to form UDP-L-4-formamido-arabinose (UDP-L-Ara4FN). The modified arabinose is attached to lipid A and is required for resistance to polymyxin and cationic antimicrobial peptides. The protein is Bifunctional polymyxin resistance protein ArnA of Escherichia coli O17:K52:H18 (strain UMN026 / ExPEC).